The chain runs to 142 residues: Large ribosomal subunit protein uL11 (142 aa).

This sequence belongs to the universal ribosomal protein uL11 family. Part of the ribosomal stalk of the 50S ribosomal subunit. Interacts with L10 and the large rRNA to form the base of the stalk. L10 forms an elongated spine to which L12 dimers bind in a sequential fashion forming a multimeric L10(L12)X complex. In terms of processing, one or more lysine residues are methylated.

In terms of biological role, forms part of the ribosomal stalk which helps the ribosome interact with GTP-bound translation factors. In Bartonella quintana (strain Toulouse) (Rochalimaea quintana), this protein is Large ribosomal subunit protein uL11.